The chain runs to 312 residues: Olfactory receptor 2T10 (312 aa).

The Extracellular segment spans residues 1–25 (MRLANQTLGGDFFLLGIFSQISHPG). Asn-5 is a glycosylation site (N-linked (GlcNAc...) asparagine). The chain crosses the membrane as a helical span at residues 26–49 (RLCLLIFSIFLMAVSWNITLILLI). Residues 50-57 (HIDSSLHT) are Cytoplasmic-facing. The helical transmembrane segment at 58–79 (PMYFFINQLSLIDLTYISVTVP) threads the bilayer. Over 80–100 (KMLVNQLAKDKTISVLGCGTQ) the chain is Extracellular. An intrachain disulfide couples Cys-97 to Cys-189. The chain crosses the membrane as a helical span at residues 101 to 120 (MYFYLQLGGAECCLLAAMAY). Over 121–139 (DRYVAICHPLRYSVLMSHR) the chain is Cytoplasmic. Residues 140-158 (VCLLLASGCWFVGSVDGFM) form a helical membrane-spanning segment. The Extracellular segment spans residues 159 to 195 (LTPIAMSFPFCRSHEIQHFFCEVPAVLKLSCSDTSLY). The helical transmembrane segment at 196 to 219 (KIFMYLCCVIMLLIPVTVISVSYY) threads the bilayer. At 220–236 (YIILTIHKMNSVEGRKK) the chain is on the cytoplasmic side. The helical transmembrane segment at 237–259 (AFTTCSSHITVVSLFYGAAIYNY) threads the bilayer. Residues 260-272 (MLPSSYQTPEKDM) lie on the Extracellular side of the membrane. A helical membrane pass occupies residues 273–292 (MSSFFYTILTPVLNPIIYSF). Over 293–312 (RNKDVTRALKKMLSVQKPPY) the chain is Cytoplasmic.

The protein belongs to the G-protein coupled receptor 1 family.

Its subcellular location is the cell membrane. Its function is as follows. Odorant receptor. The sequence is that of Olfactory receptor 2T10 (OR2T10) from Homo sapiens (Human).